A 151-amino-acid chain; its full sequence is uncharacterized protein (151 aa).

This is an uncharacterized protein from Archaeoglobus fulgidus (strain ATCC 49558 / DSM 4304 / JCM 9628 / NBRC 100126 / VC-16).